Reading from the N-terminus, the 712-residue chain is Rap1 GTPase-activating protein 2 (712 aa).

Positions 1–33 (MLAGLKVKKQELANSSDVTLPDRPLSPPLTAPP) are disordered. Residue S26 is modified to Phosphoserine. Residue T30 is modified to Phosphothreonine. The 217-residue stretch at 229–445 (IVSYDEHDVN…RTRAALLDNL (217 aa)) folds into the Rap-GAP domain. 7 positions are modified to phosphoserine: S488, S495, S525, S539, S545, S593, and S594. Residues 529–712 (AAATAKNQSR…LSHASSSAGH (184 aa)) are disordered. Polar residues predominate over residues 566-594 (DSASSTPKTPDGGHSSQEIKSETSSNPSS). Residues 599-612 (PNKEKPFIKLKENG) show a composition bias toward basic and acidic residues. Low complexity predominate over residues 617–629 (SRSSSSTSSFSST). The span at 641–652 (SGSSQPSTTSPF) shows a compositional bias: polar residues. Residues 660-669 (SPSPSSESPS) are compositionally biased toward low complexity. The span at 681–694 (RSPTDAKSRNSPRS) shows a compositional bias: polar residues.

The protein localises to the cytoplasm. GTPase activator for the nuclear Ras-related regulatory protein RAP-1A (KREV-1), converting it to the putatively inactive GDP-bound state. The protein is Rap1 GTPase-activating protein 2 (Rap1gap2) of Mus musculus (Mouse).